A 449-amino-acid chain; its full sequence is uncharacterized protein (449 aa).

The first 20 residues, 1–20 (MWTALVLIWIFSLSLSESHA), serve as a signal peptide directing secretion. Residues 21 to 400 (ASNDPRNFVP…PLTQAVVDKT (380 aa)) are Extracellular-facing. Residue asparagine 49 is glycosylated (N-linked (GlcNAc...) asparagine). Disordered regions lie at residues 72–101 (AHLN…AADG), 154–187 (MTAA…GHPS), and 215–381 (QTVA…PSTQ). 2 stretches are compositionally biased toward low complexity: residues 154 to 184 (MTAA…TATG) and 215 to 234 (QTVA…PSPS). 2 stretches are compositionally biased toward polar residues: residues 255–279 (GPIS…MPSN) and 352–367 (TPGT…SSGG). A helical transmembrane segment spans residues 401 to 421 (LLLVVLLLGVTLFITVLVLFA). At 422–449 (LQAYESYKKKDYTQVDYLINGMYADSEM) the chain is on the cytoplasmic side.

In terms of tissue distribution, highest expression in heart, placenta, liver, pancreas and colon. Also detected in brain, lung, skeletal muscle, kidney, spleen, prostate, testis, ovary and small intestine. Lowest expression in thymus and leukocytes.

The protein resides in the cell membrane. Its subcellular location is the golgi apparatus. It localises to the trans-Golgi network membrane. This is an uncharacterized protein from Homo sapiens (Human).